The following is a 175-amino-acid chain: Large ribosomal subunit protein uL10 (175 aa).

It belongs to the universal ribosomal protein uL10 family. Part of the ribosomal stalk of the 50S ribosomal subunit. The N-terminus interacts with L11 and the large rRNA to form the base of the stalk. The C-terminus forms an elongated spine to which L12 dimers bind in a sequential fashion forming a multimeric L10(L12)X complex.

Functionally, forms part of the ribosomal stalk, playing a central role in the interaction of the ribosome with GTP-bound translation factors. This is Large ribosomal subunit protein uL10 from Alkalilimnicola ehrlichii (strain ATCC BAA-1101 / DSM 17681 / MLHE-1).